The primary structure comprises 100 residues: Small ribosomal subunit protein uS14c (100 aa).

It belongs to the universal ribosomal protein uS14 family. In terms of assembly, part of the 30S ribosomal subunit.

The protein resides in the plastid. It is found in the chloroplast. Functionally, binds 16S rRNA, required for the assembly of 30S particles. The sequence is that of Small ribosomal subunit protein uS14c from Emiliania huxleyi (Coccolithophore).